Here is a 206-residue protein sequence, read N- to C-terminus: Ras-related protein Ral-A (206 aa).

GTP contacts are provided by residues 24-29, 40-46, and 127-130; these read GVGKSA, VEDYEPT, and NKSD. Positions 43 to 51 match the Effector region motif; sequence YEPTKADSY. Thr46 is a glycosylation site ((Microbial infection) O-linked (Glc) threonine; by P.sordellii toxin TcsL). At Ser194 the chain carries Phosphoserine; by AURKA. A Cysteine methyl ester modification is found at Cys203. Cys203 is lipidated: S-geranylgeranyl cysteine. A propeptide spans 204 to 206 (removed in mature form); that stretch reads CIL.

Belongs to the small GTPase superfamily. Ras family. In terms of assembly, interacts (via effector domain) with RALBP1; during mitosis, recruits RALBP1 to the mitochondrion where it promotes DNM1L phosphorylation and mitochondrial fission. Interacts with EXOC2/Sec5 and EXOC8/Exo84; binding to EXOC2 and EXOC8 is mutually exclusive. Interacts with Clostridium exoenzyme C3. Interacts with RALGPS1. Interacts with LPAR1 and LPAR2. Interacts with GRK2 in response to LPAR1 activation. RALA and GRK2 binding to LPAR1 is mutually exclusive. Interacts with CDC42. Post-translationally, phosphorylated. Phosphorylation at Ser-194 by AURKA/Aurora kinase A, during mitosis, induces RALA localization to the mitochondrion where it regulates mitochondrial fission. In terms of processing, prenylation is essential for membrane localization. The geranylgeranylated form and the farnesylated mutant do not undergo alternative prenylation in response to geranylgeranyltransferase I inhibitors (GGTIs) and farnesyltransferase I inhibitors (FTIs). (Microbial infection) Glucosylated at Thr-46 by P.sordellii toxin TcsL from strain 6018. Monoglucosylation completely prevents the recognition of the downstream effector, blocking the GTPases in their inactive form. Not glucosylated by TcsL from strain VPI 9048.

The protein resides in the cell membrane. It is found in the cleavage furrow. Its subcellular location is the midbody. The protein localises to the midbody ring. It localises to the mitochondrion. The enzyme catalyses GTP + H2O = GDP + phosphate + H(+). With respect to regulation, alternates between an inactive form bound to GDP and an active form bound to GTP. Activated by a guanine nucleotide-exchange factor (GEF) and inactivated by a GTPase-activating protein (GAP). Multifunctional GTPase involved in a variety of cellular processes including gene expression, cell migration, cell proliferation, oncogenic transformation and membrane trafficking. Accomplishes its multiple functions by interacting with distinct downstream effectors. Acts as a GTP sensor for GTP-dependent exocytosis of dense core vesicles. The RALA-exocyst complex regulates integrin-dependent membrane raft exocytosis and growth signaling. Key regulator of LPAR1 signaling and competes with GRK2 for binding to LPAR1 thus affecting the signaling properties of the receptor. Required for anchorage-independent proliferation of transformed cells. During mitosis, supports the stabilization and elongation of the intracellular bridge between dividing cells. Cooperates with EXOC2 to recruit other components of the exocyst to the early midbody. During mitosis, also controls mitochondrial fission by recruiting to the mitochondrion RALBP1, which mediates the phosphorylation and activation of DNM1L by the mitotic kinase cyclin B-CDK1. This chain is Ras-related protein Ral-A (RALA), found in Homo sapiens (Human).